Here is a 347-residue protein sequence, read N- to C-terminus: Dihydroorotase (347 aa).

Residues histidine 14 and histidine 16 each coordinate Zn(2+). Residues 16 to 18 and asparagine 42 each bind substrate; that span reads HLR. Lysine 100, histidine 137, and histidine 175 together coordinate Zn(2+). Lysine 100 is modified (N6-carboxylysine). Substrate is bound at residue histidine 137. Residue leucine 220 coordinates substrate. Position 248 (aspartate 248) interacts with Zn(2+). Aspartate 248 is an active-site residue. Substrate is bound by residues histidine 252 and alanine 264.

This sequence belongs to the metallo-dependent hydrolases superfamily. DHOase family. Class II DHOase subfamily. As to quaternary structure, homodimer. Zn(2+) is required as a cofactor.

The enzyme catalyses (S)-dihydroorotate + H2O = N-carbamoyl-L-aspartate + H(+). The protein operates within pyrimidine metabolism; UMP biosynthesis via de novo pathway; (S)-dihydroorotate from bicarbonate: step 3/3. Functionally, catalyzes the reversible cyclization of carbamoyl aspartate to dihydroorotate. In Pseudomonas syringae pv. syringae (strain B728a), this protein is Dihydroorotase.